Consider the following 549-residue polypeptide: Myotubularin-related protein 9 (549 aa).

Met1 is modified (N-acetylmethionine). Residues 4–99 (AELIKTPRVD…LNIASSIEAL (96 aa)) enclose the GRAM domain. The Myotubularin phosphatase domain occupies 123–498 (GWHSFLPEQE…QSLPLWEGIF (376 aa)). Positions 508–542 (LDEAYEEMVNIIEYNKELQAKVNILRRQLAELETE) form a coiled coil. At Ser548 the chain carries Phosphoserine.

Belongs to the protein-tyrosine phosphatase family. Non-receptor class myotubularin subfamily. In terms of assembly, homodimer. Heterodimer (via C-terminus) with lipid phosphatase MTMR6 (via C-terminus). Heterodimer (via coiled coil domain) with lipid phosphatase MTMR7 (via C-terminus). Heterodimer with lipid phosphatase MTMR8. As to expression, expressed in many tissues.

The protein localises to the cytoplasm. It is found in the cell projection. It localises to the ruffle membrane. The protein resides in the perinuclear region. Its subcellular location is the endoplasmic reticulum. In terms of biological role, acts as an adapter for myotubularin-related phosphatases. Increases lipid phosphatase MTMR6 catalytic activity, specifically towards phosphatidylinositol 3,5-bisphosphate and MTMR6 binding affinity for phosphorylated phosphatidylinositols. Positively regulates lipid phosphatase MTMR7 catalytic activity. Increases MTMR8 catalytic activity towards phosphatidylinositol 3-phosphate. The formation of the MTMR6-MTMR9 complex, stabilizes both MTMR6 and MTMR9 protein levels. Stabilizes MTMR8 protein levels. Plays a role in the late stages of macropinocytosis possibly by regulating MTMR6-mediated dephosphorylation of phosphatidylinositol 3-phosphate in membrane ruffles. Negatively regulates autophagy, in part via its association with MTMR8. Negatively regulates DNA damage-induced apoptosis, in part via its association with MTMR6. Does not bind mono-, di- and tri-phosphorylated phosphatidylinositols, phosphatidic acid and phosphatidylserine. This Homo sapiens (Human) protein is Myotubularin-related protein 9 (MTMR9).